The following is a 201-amino-acid chain: MAMSILKLRNLSALRSAANSARIGVSSRGFSKLAEGTDITSAAPGVSLQKARSWDEGVSSKFSTTPLSDIFKGKKVVIFGLPGAYTGVCSQQHVPSYKSHIDKFKAKGIDSVICVSVNDPFAINGWAEKLGAKDAIEFYGDFDGKFHKSLGLDKDLSAALLGPRSERWSAYVEDGKVKAVNVEEAPSDFKVTGAEVILGQI.

The N-terminal 30 residues, 1-30, are a transit peptide targeting the mitochondrion; that stretch reads MAMSILKLRNLSALRSAANSARIGVSSRGF. Thr-37 carries the post-translational modification Phosphothreonine. The Thioredoxin domain occupies 37–201; it reads TDITSAAPGV…TGAEVILGQI (165 aa). The active-site Cysteine sulfenic acid (-SOH) intermediate is the Cys-89. Ser-149 bears the Phosphoserine mark.

This sequence belongs to the peroxiredoxin family. Prx5 subfamily. Monomer. In terms of tissue distribution, expressed in the whole plant.

The protein resides in the mitochondrion matrix. It catalyses the reaction [glutaredoxin]-dithiol + a hydroperoxide = [glutaredoxin]-disulfide + an alcohol + H2O. Its function is as follows. Thiol-specific peroxidase that catalyzes the reduction of hydrogen peroxide and organic hydroperoxides to water and alcohols, respectively. Plays a role in cell protection against oxidative stress by detoxifying peroxides. Reduces preferentially hydrogen peroxide rather than alkyl peroxides. May be involved in mitochondrial redox homeostasis. In Arabidopsis thaliana (Mouse-ear cress), this protein is Peroxiredoxin-2F, mitochondrial (PRXIIF).